The primary structure comprises 732 residues: Zinc/cadmium/lead-transporting P-type ATPase (732 aa).

Residues Met-1–Arg-124 are Cytoplasmic-facing. The 65-residue stretch at Thr-48–Arg-112 folds into the HMA domain. Zn(2+) is bound by residues Asp-58, Cys-59, and Cys-62. Residues Leu-125–Glu-145 traverse the membrane as a helical segment. A topological domain (periplasmic) is located at residue Gln-146. A helical membrane pass occupies residues Phe-147–Ile-167. Residues Ala-168–Ser-179 lie on the Cytoplasmic side of the membrane. The helical transmembrane segment at Tyr-180 to Ile-197 threads the bilayer. The Periplasmic segment spans residues Gly-198 to Glu-202. Residues Ala-203 to Ser-222 form a helical membrane-spanning segment. Residues Arg-223–Pro-356 are Cytoplasmic-facing. The helical transmembrane segment at Ala-357–Trp-377 threads the bilayer. At Gln-378–Lys-383 the chain is on the periplasmic side. The helical transmembrane segment at Gly-384–Ile-404 threads the bilayer. 2 residues coordinate Zn(2+): Cys-392 and Cys-394. The Cytoplasmic portion of the chain corresponds to Thr-405 to Asn-685. Asp-436 functions as the 4-aspartylphosphate intermediate in the catalytic mechanism. Mg(2+) is bound by residues Asp-436, Thr-438, and Asp-628. A helical transmembrane segment spans residues Ile-686–Leu-702. At Gly-703 to Leu-707 the chain is on the periplasmic side. A helical membrane pass occupies residues Trp-708–Leu-729. Asp-714 is a Zn(2+) binding site. The Cytoplasmic portion of the chain corresponds to Arg-730 to Arg-732.

It belongs to the cation transport ATPase (P-type) (TC 3.A.3) family. Type IB subfamily.

The protein resides in the cell inner membrane. It carries out the reaction Pb(2+)(in) + ATP + H2O = Pb(2+)(out) + ADP + phosphate + H(+). The enzyme catalyses Zn(2+)(in) + ATP + H2O = Zn(2+)(out) + ADP + phosphate + H(+). The catalysed reaction is Cd(2+)(in) + ATP + H2O = Cd(2+)(out) + ADP + phosphate + H(+). Its activity is regulated as follows. Inhibited by orthovanadate. In terms of biological role, confers resistance to zinc, cadmium and lead. Couples the hydrolysis of ATP with the export of zinc, cadmium or lead, with highest activity when the metals are present as metal-thiolate complexes. Can also bind nickel, copper, cobalt and mercury. The protein is Zinc/cadmium/lead-transporting P-type ATPase of Escherichia coli (strain K12).